A 134-amino-acid chain; its full sequence is Interleukin-5 (134 aa).

Residues Met1–Ala21 form the signal peptide. Asn76 and Asn90 each carry an N-linked (GlcNAc...) asparagine glycan.

Belongs to the IL-5 family. In terms of assembly, homodimer; disulfide-linked. Interacts with IL5RA. Interacts with CSF2RB.

The protein resides in the secreted. Homodimeric cytokine expressed predominantly by T-lymphocytes and NK cells that plays an important role in the survival, differentiation, and chemotaxis of eosinophils. Also acts on activated and resting B-cells to induce immunoglobulin production, growth, and differentiation. Mechanistically, exerts its biological effects through a receptor composed of IL5RA subunit and the cytokine receptor common subunit beta/CSF2RB. Binding to the receptor leads to activation of various kinases including LYN, SYK and JAK2 and thereby propagates signals through the RAS-MAPK and JAK-STAT5 pathways respectively. This chain is Interleukin-5 (IL5), found in Bos taurus (Bovine).